Reading from the N-terminus, the 304-residue chain is Dihydroorotate dehydrogenase B (NAD(+)), catalytic subunit (304 aa).

FMN-binding positions include serine 21 and 45–46 (KA). Substrate contacts are provided by residues lysine 45 and 69–73 (NAIGL). FMN-binding residues include asparagine 99 and asparagine 127. A substrate-binding site is contributed by asparagine 127. Cysteine 130 functions as the Nucleophile in the catalytic mechanism. 2 residues coordinate FMN: lysine 165 and isoleucine 191. 192–193 (NT) contacts substrate. FMN contacts are provided by residues glycine 217, 243–244 (GG), and 265–266 (GT).

The protein belongs to the dihydroorotate dehydrogenase family. Type 1 subfamily. As to quaternary structure, heterotetramer of 2 PyrK and 2 PyrD type B subunits. FMN serves as cofactor.

It localises to the cytoplasm. The catalysed reaction is (S)-dihydroorotate + NAD(+) = orotate + NADH + H(+). It participates in pyrimidine metabolism; UMP biosynthesis via de novo pathway; orotate from (S)-dihydroorotate (NAD(+) route): step 1/1. Its function is as follows. Catalyzes the conversion of dihydroorotate to orotate with NAD(+) as electron acceptor. This Shouchella clausii (strain KSM-K16) (Alkalihalobacillus clausii) protein is Dihydroorotate dehydrogenase B (NAD(+)), catalytic subunit (pyrD).